The primary structure comprises 531 residues: PHD finger protein 21B (531 aa).

Disordered regions lie at residues 79-99, 184-222, 238-277, and 295-314; these read PDSL…PTFQ, SADN…SLSP, VQTQ…ENPE, and EIQS…PAYS. The span at 265–277 shows a compositional bias: basic and acidic residues; it reads KKEDRPPTQENPE. The segment at 352-399 adopts a PHD-type zinc-finger fold; it reads DEHCAACKRGANLQPCGTCPGAYHLSCLEPPLKTAPKGVWVCPRCQQK. Residues 423–465 adopt a coiled-coil conformation; the sequence is KTVKEEEKQKLLQRGSELQNEHQQLEERDRRLASAVQKCLELK. A disordered region spans residues 507–531; that stretch reads LLAGPWTKPSVAATHPTVQHPQGHN. The span at 522-531 shows a compositional bias: polar residues; it reads PTVQHPQGHN.

The chain is PHD finger protein 21B (PHF21B) from Homo sapiens (Human).